We begin with the raw amino-acid sequence, 65 residues long: Large ribosomal subunit protein uL30 (65 aa).

Belongs to the universal ribosomal protein uL30 family. As to quaternary structure, part of the 50S ribosomal subunit.

In Desulfosudis oleivorans (strain DSM 6200 / JCM 39069 / Hxd3) (Desulfococcus oleovorans), this protein is Large ribosomal subunit protein uL30.